A 558-amino-acid polypeptide reads, in one-letter code: Rhamnogalacturonase B (558 aa).

The first 21 residues, 1 to 21 (MLLDKLSVLSFLGLAPIFAAA), serve as a signal peptide directing secretion. Cysteine 42 and cysteine 68 are joined by a disulfide. N-linked (GlcNAc...) asparagine glycosylation occurs at asparagine 145. The active-site Proton donor is aspartate 219. Residues cysteine 221 and cysteine 238 are joined by a disulfide bond. Asparagine 239 and asparagine 254 each carry an N-linked (GlcNAc...) asparagine glycan. Residue histidine 294 is part of the active site. An N-linked (GlcNAc...) asparagine glycan is attached at asparagine 321. Intrachain disulfides connect cysteine 344-cysteine 350 and cysteine 372-cysteine 381. A compositionally biased stretch (low complexity) spans 503 to 526 (VGAQEGSTTSAPSFAAPSGAGNSP). Positions 503–558 (VGAQEGSTTSAPSFAAPSGAGNSPQGPTGASGFGEKGQQGEQGEQGEQGEQGVCYV) are disordered.

Belongs to the glycosyl hydrolase 28 family.

The protein resides in the secreted. The enzyme catalyses Endohydrolysis of alpha-D-GalA-(1-&gt;2)-alpha-L-Rha glycosidic bond in the rhamnogalacturonan I backbone with initial inversion of anomeric configuration releasing oligosaccharides with beta-D-GalA at the reducing end.. Functionally, pectinolytic enzymes consist of four classes of enzymes: pectine lyase, polygalacturonase, pectin methylesterase and rhamnogalacturonase. Hydrolyzes alpha-D-galacturonopyranosyl-(1,2)-alpha-L-rhamnopyranosyl linkages in the backbone of the hairy regions of pectins. This is Rhamnogalacturonase B (rhgB) from Aspergillus niger.